The following is a 248-amino-acid chain: MKGLKGLLVLALGFTGLQVFGQQNPDIKIEKLKDNLYVYTTYNTFKGTKYAANAVYMVTDKGIVVIDSPWGEDKFKSFTDEIYKKHGKKVIMNIATHSHDDRAGGLEYFGKLGAKTYSTKMTDSILAKENKPRAKYTFDNNKSFKVGKTEFQVYYPGKGHTADNVVVWFPKDKVLVGGCIVKSGDSKDLGFIGEAYVNDWTQSIHNIQQKFPDVQYVVAGHDDWKDQTSIQHTLDLISEYQQKQKASN.

The N-terminal stretch at 1 to 21 (MKGLKGLLVLALGFTGLQVFG) is a signal peptide. Residues H97, H99, D101, H160, and C179 each contribute to the Zn(2+) site. K182 contacts substrate. H221 contacts Zn(2+).

This sequence belongs to the metallo-beta-lactamase superfamily. Class-B beta-lactamase family. As to quaternary structure, monomer. Requires Zn(2+) as cofactor.

Its subcellular location is the periplasm. The catalysed reaction is a beta-lactam + H2O = a substituted beta-amino acid. Functionally, confers resistance to the different beta-lactams antibiotics (penicillin, cephalosporin and carbapenem) via the hydrolysis of the beta-lactam ring. The protein is Metallo-beta-lactamase type 2 (blaB7) of Elizabethkingia meningoseptica (Chryseobacterium meningosepticum).